A 430-amino-acid chain; its full sequence is Asparagine--tRNA ligase (430 aa).

This sequence belongs to the class-II aminoacyl-tRNA synthetase family. In terms of assembly, homodimer.

It is found in the cytoplasm. The catalysed reaction is tRNA(Asn) + L-asparagine + ATP = L-asparaginyl-tRNA(Asn) + AMP + diphosphate + H(+). The polypeptide is Asparagine--tRNA ligase (Geobacillus thermodenitrificans (strain NG80-2)).